The following is a 382-amino-acid chain: Cytochrome b (382 aa).

4 helical membrane-spanning segments follow: residues 28 to 48, 72 to 94, 107 to 127, and 169 to 189; these read YGFL…FLAS, WCFR…LHIL, SWIS…IGYV, and FFVL…IHIF. The heme b site is built by His-78 and His-92. 2 residues coordinate heme b: His-173 and His-187. His-192 is an a ubiquinone binding site. The next 4 helical transmembrane spans lie at 214 to 234, 274 to 294, 317 to 337, and 340 to 360; these read LLSL…LQSI, IPSK…LFLL, VPMI…CQLP, and IFIL…LFAL.

Belongs to the cytochrome b family. In terms of assembly, the main subunits of complex b-c1 are: cytochrome b, cytochrome c1 and the Rieske protein. Heme b serves as cofactor.

It is found in the mitochondrion inner membrane. Component of the ubiquinol-cytochrome c reductase complex (complex III or cytochrome b-c1 complex) that is part of the mitochondrial respiratory chain. The b-c1 complex mediates electron transfer from ubiquinol to cytochrome c. Contributes to the generation of a proton gradient across the mitochondrial membrane that is then used for ATP synthesis. The chain is Cytochrome b (MT-CYB) from Plasmodium vivax (strain Salvador I).